Here is a 531-residue protein sequence, read N- to C-terminus: Peptide chain release factor 3 (531 aa).

In terms of domain architecture, tr-type G spans 13–282; sequence AKRRTFAIIS…TLIKYSPPPK (270 aa). GTP is bound by residues 22–29, 90–94, and 144–147; these read SHPDAGKT, DTPGH, and NKLD.

Belongs to the TRAFAC class translation factor GTPase superfamily. Classic translation factor GTPase family. PrfC subfamily.

The protein resides in the cytoplasm. Functionally, increases the formation of ribosomal termination complexes and stimulates activities of RF-1 and RF-2. It binds guanine nucleotides and has strong preference for UGA stop codons. It may interact directly with the ribosome. The stimulation of RF-1 and RF-2 is significantly reduced by GTP and GDP, but not by GMP. This Psychrobacter arcticus (strain DSM 17307 / VKM B-2377 / 273-4) protein is Peptide chain release factor 3.